We begin with the raw amino-acid sequence, 162 residues long: Protein-export protein SecB 2 (162 aa).

It belongs to the SecB family. In terms of assembly, homotetramer, a dimer of dimers. One homotetramer interacts with 1 SecA dimer.

It is found in the cytoplasm. Functionally, one of the proteins required for the normal export of preproteins out of the cell cytoplasm. It is a molecular chaperone that binds to a subset of precursor proteins, maintaining them in a translocation-competent state. It also specifically binds to its receptor SecA. This Polaromonas naphthalenivorans (strain CJ2) protein is Protein-export protein SecB 2.